Here is a 185-residue protein sequence, read N- to C-terminus: Ribosome-recycling factor (185 aa).

The protein belongs to the RRF family.

It localises to the cytoplasm. Responsible for the release of ribosomes from messenger RNA at the termination of protein biosynthesis. May increase the efficiency of translation by recycling ribosomes from one round of translation to another. The protein is Ribosome-recycling factor of Corynebacterium jeikeium (strain K411).